We begin with the raw amino-acid sequence, 940 residues long: Chordin (940 aa).

Residues 1–19 form the signal peptide; the sequence is MMEGLLWILLSVIIASVHG. Residues 42 to 118 enclose the VWFC 1 domain; sequence SGCSFGGRFY…LPGHCCKTCP (77 aa). CHRD domains follow at residues 162-277, 279-398, 404-519, and 525-652; these read TTTD…KHRA, FAET…GRRS, SVLS…LLPY, and RRNE…VPNH. N-linked (GlcNAc...) asparagine glycans are attached at residues asparagine 347 and asparagine 430. VWFC domains follow at residues 689-748, 767-836, and 855-919; these read HSCF…PICE, EGCY…KECP, and RLCK…PECI.

Belongs to the chordin family. In terms of assembly, interacts with twsg1 and/or bmp4. Cleaved by tolloid proteases; cleavage participates in dorsoventral patterning during early development.

The protein resides in the secreted. Dorsalizing factor. Key developmental protein that dorsalizes early vertebrate embryonic tissues by binding to ventralizing TGF-beta family bone morphogenetic proteins (BMPs) and sequestering them in latent complexes. The chain is Chordin (chd) from Danio rerio (Zebrafish).